The chain runs to 124 residues: Insulin-like growth factor 1 (124 aa).

Residues I1–A19 constitute a propeptide that is removed on maturation. Residues G20–T48 are b. 3 disulfides stabilise this stretch: C25/C67, C37/C80, and C66/C71. Residues G49–K60 form a c region. The a stretch occupies residues G61–A81. Residues P82–A89 are d. Residues P86–M124 are disordered. The propeptide at R90 to M124 is e peptide. Over residues R96–L109 the composition is skewed to basic and acidic residues. Positions K110–M124 are enriched in polar residues.

It belongs to the insulin family.

It localises to the secreted. Functionally, the insulin-like growth factors, isolated from plasma, are structurally and functionally related to insulin but have a much higher growth-promoting activity. Acts as a ligand for IGF1R. Binds to the alpha subunit of IGF1R, leading to the activation of the intrinsic tyrosine kinase activity which autophosphorylates tyrosine residues in the beta subunit thus initiatiating a cascade of down-stream signaling events leading to activation of the PI3K-AKT/PKB and the Ras-MAPK pathways. Binds to integrins. Its binding to integrins and subsequent ternary complex formation with integrins and IGFR1 are essential for IGF1 signaling. The chain is Insulin-like growth factor 1 from Coturnix japonica (Japanese quail).